The chain runs to 416 residues: D-amino acid dehydrogenase (416 aa).

Residue 3 to 17 (ITILGSGVIGVTTAY) participates in FAD binding.

This sequence belongs to the DadA oxidoreductase family. FAD is required as a cofactor.

It carries out the reaction a D-alpha-amino acid + A + H2O = a 2-oxocarboxylate + AH2 + NH4(+). It participates in amino-acid degradation; D-alanine degradation; NH(3) and pyruvate from D-alanine: step 1/1. Functionally, oxidative deamination of D-amino acids. The sequence is that of D-amino acid dehydrogenase from Brucella canis (strain ATCC 23365 / NCTC 10854 / RM-666).